Here is a 139-residue protein sequence, read N- to C-terminus: MSTVSQLIKKRRSSKTSKTKAPALSYGFNVLQKKNKHYSSPQKMGVCLRVTTMTPKKPNSALRKFARVRLSNGSEVTAYIPGVGHSLQEHSSVLVRGGRVKDLPGVRYHIVRGALDATGVANRKQGRSKYGSKLPKEKK.

Residues 1 to 21 (MSTVSQLIKKRRSSKTSKTKA) are disordered. Residues 8-18 (IKKRRSSKTSK) show a composition bias toward basic residues. Asp-102 is subject to 3-methylthioaspartic acid.

Belongs to the universal ribosomal protein uS12 family. As to quaternary structure, part of the 30S ribosomal subunit. Contacts proteins S8 and S17. May interact with IF1 in the 30S initiation complex.

Its function is as follows. With S4 and S5 plays an important role in translational accuracy. Functionally, interacts with and stabilizes bases of the 16S rRNA that are involved in tRNA selection in the A site and with the mRNA backbone. Located at the interface of the 30S and 50S subunits, it traverses the body of the 30S subunit contacting proteins on the other side and probably holding the rRNA structure together. The combined cluster of proteins S8, S12 and S17 appears to hold together the shoulder and platform of the 30S subunit. In Aster yellows witches'-broom phytoplasma (strain AYWB), this protein is Small ribosomal subunit protein uS12.